The sequence spans 710 residues: Prolyl endopeptidase (710 aa).

Methionine 1 is subject to N-acetylmethionine. Position 157 is an N6-acetyllysine (lysine 157). Residues serine 554, aspartate 641, and histidine 680 each act as charge relay system in the active site.

This sequence belongs to the peptidase S9A family. As to expression, expressed in all tissues tested: uterus, kidney, heart, lung, small intestine, smooth muscle, liver, spleen, thymus, adrenal, pituitary and whole brain.

It localises to the cytoplasm. The enzyme catalyses Hydrolysis of Pro-|-Xaa &gt;&gt; Ala-|-Xaa in oligopeptides.. Inhibited by DFP, Z-Pro-prolinal and poststatin, but not by PMSF, SBTI, EDTA, leupeptin, E-64 and pepstatin. In terms of biological role, cleaves peptide bonds on the C-terminal side of prolyl residues within peptides that are up to approximately 30 amino acids long. Has high activity on the succinyl- (suc-) peptide-4-methylcoumaryl-7-amide (MCA) substrates suc-Gly-Pro-Leu-Gly-Pro-MCA, suc-Gly-Pro-MCA and suc-Ala-Ala-Ala-MCA. The sequence is that of Prolyl endopeptidase from Rattus norvegicus (Rat).